A 137-amino-acid polypeptide reads, in one-letter code: Large ribosomal subunit protein uL16 (137 aa).

Belongs to the universal ribosomal protein uL16 family. In terms of assembly, part of the 50S ribosomal subunit.

In terms of biological role, binds 23S rRNA and is also seen to make contacts with the A and possibly P site tRNAs. The polypeptide is Large ribosomal subunit protein uL16 (Xanthobacter autotrophicus (strain ATCC BAA-1158 / Py2)).